The following is a 466-amino-acid chain: 3-isopropylmalate dehydratase large subunit (466 aa).

Residues Cys-347, Cys-407, and Cys-410 each coordinate [4Fe-4S] cluster.

Belongs to the aconitase/IPM isomerase family. LeuC type 1 subfamily. Heterodimer of LeuC and LeuD. [4Fe-4S] cluster serves as cofactor.

The catalysed reaction is (2R,3S)-3-isopropylmalate = (2S)-2-isopropylmalate. It participates in amino-acid biosynthesis; L-leucine biosynthesis; L-leucine from 3-methyl-2-oxobutanoate: step 2/4. Its function is as follows. Catalyzes the isomerization between 2-isopropylmalate and 3-isopropylmalate, via the formation of 2-isopropylmaleate. The polypeptide is 3-isopropylmalate dehydratase large subunit (Pectobacterium carotovorum subsp. carotovorum (strain PC1)).